A 751-amino-acid polypeptide reads, in one-letter code: Semaphorin-3C (751 aa).

Positions 1 to 20 (MAFRTICVLVGVFICSICVK) are cleaved as a signal peptide. A Sema domain is found at 28 to 511 (RVYLTFDELR…SNEGVSQVSL (484 aa)). N-linked (GlcNAc...) asparagine glycosylation occurs at N81. The cysteines at positions 101 and 112 are disulfide-linked. Residue N123 is glycosylated (N-linked (GlcNAc...) asparagine). C130 and C139 are oxidised to a cystine. Residues N252 and N268 are each glycosylated (N-linked (GlcNAc...) asparagine). 2 disulfides stabilise this stretch: C266/C378 and C290/C338. An N-linked (GlcNAc...) asparagine glycan is attached at N465. Residues C514 and C532 are joined by a disulfide bond. The Ig-like C2-type domain occupies 571–655 (AYRNAAEIVQ…TENSFKQTIA (85 aa)). N-linked (GlcNAc...) asparagine glycosylation is found at N585 and N586. Cysteines 643 and 709 form a disulfide. Basic and acidic residues predominate over residues 712–731 (TRQQHQQGDESQKMRGDYGK). The interval 712–751 (TRQQHQQGDESQKMRGDYGKLKALINSRKSRNRRNQLPES) is disordered.

Belongs to the semaphorin family. As to quaternary structure, interacts with PLXND1. As to expression, expressed intensely in the heart, skeletal muscle, colon, small intestine, ovary, testis, and prostate. Faint expression ubiquitously among other organs, including brain.

It is found in the secreted. Binds to plexin family members and plays an important role in the regulation of developmental processes. Required for normal cardiovascular development during embryogenesis. Functions as attractant for growing axons, and thereby plays an important role in axon growth and axon guidance. The protein is Semaphorin-3C (SEMA3C) of Homo sapiens (Human).